The sequence spans 189 residues: Casparian strip membrane protein 2 (189 aa).

The segment at 1-21 is disordered; it reads MKVSTIESGEISKGASSPRKG. Residues 1-25 are Cytoplasmic-facing; sequence MKVSTIESGEISKGASSPRKGMKRG. Residues 26–46 form a helical membrane-spanning segment; it reads LSIMDFILRIFAAMSTLGSAL. Residues 47–73 are Extracellular-facing; it reads SMGTAKQTMPFATRFVRFKVSFHDLPT. Residues 74-94 traverse the membrane as a helical segment; sequence FLFFVTANSIVCGYLALSLVL. Residues 95–108 lie on the Cytoplasmic side of the membrane; sequence SFFHIVRTISVKSR. The chain crosses the membrane as a helical span at residues 109–129; it reads ILLVFLDTVMFGLLTSGASAA. Topologically, residues 130–163 are extracellular; the sequence is AAIVYVAHYGNPSANWFPFCQQYNSFCGRISGSL. The helical transmembrane segment at 164 to 184 threads the bilayer; the sequence is VGSFIAVVIFMILILMSGISI. Residues 185-189 are Cytoplasmic-facing; that stretch reads SKSKH.

This sequence belongs to the Casparian strip membrane proteins (CASP) family. In terms of assembly, homodimer and heterodimers.

Its subcellular location is the cell membrane. Functionally, regulates membrane-cell wall junctions and localized cell wall deposition. Required for establishment of the Casparian strip membrane domain (CSD) and the subsequent formation of Casparian strips, a cell wall modification of the root endodermis that determines an apoplastic barrier between the intraorganismal apoplasm and the extraorganismal apoplasm and prevents lateral diffusion. In Medicago truncatula (Barrel medic), this protein is Casparian strip membrane protein 2.